Here is a 597-residue protein sequence, read N- to C-terminus: DDB1- and CUL4-associated factor 8 (597 aa).

Over residues 1-24 the composition is skewed to polar residues; the sequence is MSSKGSSTDGRTDLANGSLSSSPE. The interval 1–147 is disordered; the sequence is MSSKGSSTDG…DWVSSETSAL (147 aa). Residues Ser21 and Ser22 each carry the phosphoserine modification. Residues 39–50 carry the Nuclear export signal motif; the sequence is IEVEASDLSLSL. Basic and acidic residues predominate over residues 65-99; the sequence is RGTDTESSGEDKDSDSMEDTGHYSINDENRVHDRS. Ser99 carries the phosphoserine modification. Acidic residues predominate over residues 100-112; that stretch reads EEEEEEEEEEEEE. Positions 114–122 match the Nuclear localization signal motif; sequence PRRRVQRKR. Over residues 124-137 the composition is skewed to basic and acidic residues; it reads NRDQDSSDDERALE. Residues Ser129 and Ser130 each carry the phosphoserine modification. WD repeat units follow at residues 191-230, 234-275, 281-321, 329-369, 385-424, 432-472, and 476-515; these read GHTGCVNTLHFNQRGTWLASGSDDLKVVVWDWVRRQPVLD, GHKS…CCKN, QHKG…PASK, EKKV…ENEN, ESKANITCLVYSHDGTELLASYNDEDIYLFNSSHSDGAQY, RNNA…IIQF, and DKGGVVNCLEPHPHLPVLATSGLDHDVKIWAPTAEASTEL. Position 204 is an omega-N-methylarginine; by PRMT1 (Arg204). Residues 558–597 form a disordered region; that stretch reads HRRWREPGVGATDADSDESPSSSDTSDEEEGPDRVQCMPS.

It belongs to the WD repeat DCAF8 family. As to quaternary structure, interacts with DDB1, CUL4A and CUL4B. Interacts with KPNA1, KPNB1 and XPO1.

Its subcellular location is the nucleus. It is found in the cytoplasm. It participates in protein modification; protein ubiquitination. In terms of biological role, may function as a substrate receptor for CUL4-DDB1 E3 ubiquitin-protein ligase complex. The sequence is that of DDB1- and CUL4-associated factor 8 (DCAF8) from Homo sapiens (Human).